The chain runs to 384 residues: Magnesium transporter MRS2-I (384 aa).

2 helical membrane-spanning segments follow: residues 319–339 (LFLSSGTVCLSLYSLVAGIFG) and 356–376 (WVVLVSGLFCAFMFVSIVAYA). The Required for magnesium transport activity signature appears at 339-341 (GMN).

Belongs to the CorA metal ion transporter (MIT) (TC 1.A.35.5) family.

Its subcellular location is the membrane. Its function is as follows. Magnesium transporter that may mediate the influx of magnesium. The polypeptide is Magnesium transporter MRS2-I (MRS2-I) (Oryza sativa subsp. japonica (Rice)).